We begin with the raw amino-acid sequence, 699 residues long: Polyribonucleotide nucleotidyltransferase (699 aa).

Residues aspartate 485 and aspartate 491 each contribute to the Mg(2+) site. The KH domain occupies 552–611 (PRITTIKINPEKIRDVIGKGGAVIRALTEETGTTIELEDDGTVKIASSNGEATKEAIRRI). The S1 motif domain occupies 621–689 (GRIYNGKVIR…RQGRVRLSIK (69 aa)).

This sequence belongs to the polyribonucleotide nucleotidyltransferase family. Component of the RNA degradosome, which is a multiprotein complex involved in RNA processing and mRNA degradation. Mg(2+) serves as cofactor.

It is found in the cytoplasm. The enzyme catalyses RNA(n+1) + phosphate = RNA(n) + a ribonucleoside 5'-diphosphate. In terms of biological role, involved in mRNA degradation. Catalyzes the phosphorolysis of single-stranded polyribonucleotides processively in the 3'- to 5'-direction. The sequence is that of Polyribonucleotide nucleotidyltransferase from Shewanella oneidensis (strain ATCC 700550 / JCM 31522 / CIP 106686 / LMG 19005 / NCIMB 14063 / MR-1).